Reading from the N-terminus, the 459-residue chain is ATP-binding protein Uup-like (459 aa).

Positions 132–350 (FEMEDVSYEI…QQANFWASKA (219 aa)) constitute an ABC transporter domain. Position 164-171 (164-171 (GPNGCGKT)) interacts with ATP. The span at 357 to 375 (AKKSEPLKEESAVKNDRTS) shows a compositional bias: basic and acidic residues. Positions 357–381 (AKKSEPLKEESAVKNDRTSKPKSVK) are disordered.

It belongs to the ABC transporter superfamily. ABCF family. Uup subfamily.

The protein resides in the cytoplasm. The catalysed reaction is ATP + H2O = ADP + phosphate + H(+). In terms of biological role, might play a role in ribosome assembly or function; this is missing the first ABC transporter domain compared to paralogs. This chain is ATP-binding protein Uup-like (uup-B), found in Haemophilus influenzae (strain ATCC 51907 / DSM 11121 / KW20 / Rd).